A 432-amino-acid polypeptide reads, in one-letter code: Serine hydroxymethyltransferase (432 aa).

(6S)-5,6,7,8-tetrahydrofolate-binding positions include L117 and 121–123 (GHL). K226 carries the post-translational modification N6-(pyridoxal phosphate)lysine. 366 to 368 (SPF) lines the (6S)-5,6,7,8-tetrahydrofolate pocket.

This sequence belongs to the SHMT family. Homodimer. Requires pyridoxal 5'-phosphate as cofactor.

The protein localises to the cytoplasm. It carries out the reaction (6R)-5,10-methylene-5,6,7,8-tetrahydrofolate + glycine + H2O = (6S)-5,6,7,8-tetrahydrofolate + L-serine. It participates in one-carbon metabolism; tetrahydrofolate interconversion. It functions in the pathway amino-acid biosynthesis; glycine biosynthesis; glycine from L-serine: step 1/1. Catalyzes the reversible interconversion of serine and glycine with tetrahydrofolate (THF) serving as the one-carbon carrier. This reaction serves as the major source of one-carbon groups required for the biosynthesis of purines, thymidylate, methionine, and other important biomolecules. Also exhibits THF-independent aldolase activity toward beta-hydroxyamino acids, producing glycine and aldehydes, via a retro-aldol mechanism. In Salinibacter ruber (strain DSM 13855 / M31), this protein is Serine hydroxymethyltransferase.